The sequence spans 728 residues: Fibulin-1 (728 aa).

Residues 1-17 (MRICFLLLAFLVAETFA) form the signal peptide. 30 disulfides stabilise this stretch: cysteine 23–cysteine 49, cysteine 24–cysteine 56, cysteine 37–cysteine 57, cysteine 66–cysteine 94, cysteine 79–cysteine 95, cysteine 97–cysteine 121, cysteine 98–cysteine 128, cysteine 111–cysteine 129, cysteine 159–cysteine 168, cysteine 164–cysteine 178, cysteine 180–cysteine 279, cysteine 285–cysteine 298, cysteine 292–cysteine 307, cysteine 347–cysteine 359, cysteine 353–cysteine 368, cysteine 375–cysteine 388, cysteine 394–cysteine 404, cysteine 399–cysteine 413, cysteine 415–cysteine 428, cysteine 434–cysteine 448, cysteine 442–cysteine 457, cysteine 459–cysteine 472, cysteine 478–cysteine 489, cysteine 485–cysteine 498, cysteine 500–cysteine 513, cysteine 519–cysteine 534, cysteine 530–cysteine 543, cysteine 545–cysteine 558, cysteine 564–cysteine 576, and cysteine 569–cysteine 585. 3 consecutive Anaphylatoxin-like domains span residues 23–64 (CCAG…LLDN), 65–96 (ACDSGTDIAKEEESCPSNINILGGGLKKECCD), and 97–129 (CCLLAKDLLNRNEPCVAPVGFSAGCLRSFNKCC). The EGF-like 1 domain maps to 155-194 (LGDRCASSHCEHLCHDRGGEKVECSCRSGFDLAPDGMACV). One can recognise an EGF-like 2; calcium-binding domain in the interval 195 to 280 (DRNECLTRQS…GWLFQHGHCV (86 aa)). In terms of domain architecture, EGF-like 3; calcium-binding spans 281 to 344 (DVDECNLGSH…YPKNGMCNDI (64 aa)). The EGF-like 4; calcium-binding domain occupies 343–389 (DIDECVTGHNCGAGEECVNTPGSFRCQQKGNLCAHGYEVNGATGFCE). Residues 390-429 (DVNECQQGVCGSMECINLPGTYKCKCGPGYEFNDAKKRCE) enclose the EGF-like 5; calcium-binding domain. Positions 430-473 (DVDECIKFAGHVCDLSAECINTIGSFECKCKPGFQLASDGRRCE) constitute an EGF-like 6; calcium-binding domain. The region spanning 474-514 (DVNECTTGIAACEQKCVNIPGSYQCICDRGFALGPDGTKCE) is the EGF-like 7; calcium-binding domain. One can recognise an EGF-like 8; calcium-binding domain in the interval 515-559 (DIDECSIWAGSGNDLCMGGCINTKGSYLCQCPPGYKIQPDGRTCV). In terms of domain architecture, EGF-like 9; calcium-binding spans 560–610 (DVDECAMGECAGSDKVCVNTLGSFKCHSIDCPTNYIHDSLNKNQIADGYSC). N-linked (GlcNAc...) asparagine glycosylation occurs at asparagine 624.

This sequence belongs to the fibulin family. As to quaternary structure, homomultimerizes and interacts with various extracellular matrix components. In terms of tissue distribution, expressed in head muscle cells, anterior and posterior intestinal cells. Isoform a: Expressed in male and hermaphrodite gonad, anterior and posterior intestine and pharyngeal basement membranes, body-wall muscle, GLR cells, uterine attachment and mechanosensory neurons. Isoform c: Expressed on ALM/PLM mechanosensory neuron attachments, in flexible tracks connecting the pharyngeal, body-wall-muscle basement membranes and in uterine attachments.

It is found in the secreted. It localises to the extracellular space. The protein localises to the extracellular matrix. The protein resides in the basement membrane. Incorporated into fibronectin-containing matrix fibers. Plays a role in cell adhesion and migration along protein fibers within the extracellular matrix (ECM). Important for certain developmental processes and contributes to the supramolecular organization of ECM architecture, in particular to those of basement membranes. Functionally, involved in regulating the shape and adhesion of cells in the developing pharynx, intestine, body-wall muscle and gonadal tissue. During gonadogenesis, regulates the width of gonads and the migration of distal tip cells (DTC). Together with type IV collagen let-2 and downstream of metalloprotease mig-17, recruits nidogen nid-1 to the gonad basement membrane thereby inducing basement membrane remodeling required for the directional migration of DTCs. Acts antagonistically with metalloprotease gon-1 to maintain optimal levels of type IV collagen emb-9 in the gonad basement membrane during gonadogenesis. Required for larval development. In terms of biological role, involved in the assembly of the flexible hemicentin-containing tracks found joining the pharynx and body-wall-muscle basement membranes. The polypeptide is Fibulin-1 (fbl-1) (Caenorhabditis elegans).